The chain runs to 423 residues: Adenosylmethionine-8-amino-7-oxononanoate aminotransferase (423 aa).

A substrate-binding site is contributed by Trp51. 111-112 (GS) is a pyridoxal 5'-phosphate binding site. Residue Tyr144 participates in substrate binding. Asp243 is a binding site for pyridoxal 5'-phosphate. Residues Lys272 and Gly306 each coordinate substrate. Residue Lys272 is modified to N6-(pyridoxal phosphate)lysine. Residue 307–308 (PT) participates in pyridoxal 5'-phosphate binding. Arg390 contacts substrate.

Belongs to the class-III pyridoxal-phosphate-dependent aminotransferase family. BioA subfamily. In terms of assembly, homodimer. Requires pyridoxal 5'-phosphate as cofactor.

The protein localises to the cytoplasm. The catalysed reaction is (8S)-8-amino-7-oxononanoate + S-adenosyl-L-methionine = S-adenosyl-4-methylsulfanyl-2-oxobutanoate + (7R,8S)-7,8-diammoniononanoate. Its pathway is cofactor biosynthesis; biotin biosynthesis; 7,8-diaminononanoate from 8-amino-7-oxononanoate (SAM route): step 1/1. Catalyzes the transfer of the alpha-amino group from S-adenosyl-L-methionine (SAM) to 7-keto-8-aminopelargonic acid (KAPA) to form 7,8-diaminopelargonic acid (DAPA). It is the only aminotransferase known to utilize SAM as an amino donor. The protein is Adenosylmethionine-8-amino-7-oxononanoate aminotransferase of Corynebacterium glutamicum (strain ATCC 13032 / DSM 20300 / JCM 1318 / BCRC 11384 / CCUG 27702 / LMG 3730 / NBRC 12168 / NCIMB 10025 / NRRL B-2784 / 534).